We begin with the raw amino-acid sequence, 272 residues long: Granaticin polyketide synthase putative ketoacyl reductase 1 (272 aa).

21 to 45 (LVTGATSGIGLAIARRLAALGARTF) contributes to the NAD(+) binding site. Residue Ser-155 coordinates substrate. The Proton acceptor role is filled by Tyr-168.

Belongs to the short-chain dehydrogenases/reductases (SDR) family.

Its pathway is antibiotic biosynthesis; granaticin biosynthesis. This is Granaticin polyketide synthase putative ketoacyl reductase 1 (gra-orf5) from Streptomyces violaceoruber.